A 199-amino-acid polypeptide reads, in one-letter code: 7-methyl-GTP pyrophosphatase (199 aa).

The active-site Proton acceptor is Asp-76.

It belongs to the Maf family. YceF subfamily. It depends on a divalent metal cation as a cofactor.

The protein resides in the cytoplasm. The enzyme catalyses N(7)-methyl-GTP + H2O = N(7)-methyl-GMP + diphosphate + H(+). Its function is as follows. Nucleoside triphosphate pyrophosphatase that hydrolyzes 7-methyl-GTP (m(7)GTP). May have a dual role in cell division arrest and in preventing the incorporation of modified nucleotides into cellular nucleic acids. The chain is 7-methyl-GTP pyrophosphatase from Rhizobium meliloti (strain 1021) (Ensifer meliloti).